We begin with the raw amino-acid sequence, 660 residues long: F-box/LRR-repeat protein 5 (660 aa).

Positions 1–157 (MAPFPDEVDL…IKKKVIAQHC (157 aa)) are hemerythrin-like. The Fe(3+) site is built by His-15, His-57, Glu-58, Glu-61, His-80, His-124, and Glu-127. Residues 200-246 (SASICNLPPEVMLNIFSYLNPQDLCRCSQVNTKWAQLARTGSLWRHL) form the F-box domain. A disordered region spans residues 283-305 (YQEWDEDADIDESEETGEDDPSI). Residues 285–303 (EWDEDADIDESEETGEDDP) show a composition bias toward acidic residues. 8 LRR repeats span residues 311-337 (EKEL…VLAY), 338-362 (SSAT…LDLT), 363-389 (QTDI…DLSG), 390-417 (CEKI…RLLK), 551-576 (IRDI…SLSG), 577-604 (CHQI…NLSG), 605-630 (CLNV…HFYY), and 631-649 (CDNI…QNLQ). [2Fe-2S] cluster contacts are provided by Cys-631, Cys-645, Cys-655, and Cys-656.

As to quaternary structure, part of a SCF (SKP1-cullin-F-box) protein ligase complex. Requires [2Fe-2S] cluster as cofactor. Post-translationally, ubiquitinated upon iron and oxygen depletion, leading to its degradation by the proteasome. Ubiquitination is regulated by the hemerythrin-like region that acts as an oxygen and iron sensor.

It is found in the cytoplasm. It localises to the perinuclear region. Its subcellular location is the nucleus. It participates in protein modification; protein ubiquitination. Functionally, component of some SCF (SKP1-cullin-F-box) protein ligase complex that plays a central role in iron homeostasis by promoting the ubiquitination and subsequent degradation of ireb2/irp2. Upon high iron and oxygen level, it specifically recognizes and binds ireb2/irp2, promoting its ubiquitination and degradation by the proteasome. The sequence is that of F-box/LRR-repeat protein 5 (fbxl5) from Xenopus tropicalis (Western clawed frog).